The primary structure comprises 216 residues: Protein-L-isoaspartate O-methyltransferase 1 (216 aa).

Residue S60 is part of the active site.

This sequence belongs to the methyltransferase superfamily. L-isoaspartyl/D-aspartyl protein methyltransferase family.

The protein localises to the cytoplasm. The catalysed reaction is [protein]-L-isoaspartate + S-adenosyl-L-methionine = [protein]-L-isoaspartate alpha-methyl ester + S-adenosyl-L-homocysteine. Its function is as follows. Catalyzes the methyl esterification of L-isoaspartyl residues in peptides and proteins that result from spontaneous decomposition of normal L-aspartyl and L-asparaginyl residues. It plays a role in the repair and/or degradation of damaged proteins. This Archaeoglobus fulgidus (strain ATCC 49558 / DSM 4304 / JCM 9628 / NBRC 100126 / VC-16) protein is Protein-L-isoaspartate O-methyltransferase 1 (pcm1).